Reading from the N-terminus, the 427-residue chain is Gamma-glutamyl phosphate reductase (427 aa).

This sequence belongs to the gamma-glutamyl phosphate reductase family.

The protein localises to the cytoplasm. It carries out the reaction L-glutamate 5-semialdehyde + phosphate + NADP(+) = L-glutamyl 5-phosphate + NADPH + H(+). It functions in the pathway amino-acid biosynthesis; L-proline biosynthesis; L-glutamate 5-semialdehyde from L-glutamate: step 2/2. Functionally, catalyzes the NADPH-dependent reduction of L-glutamate 5-phosphate into L-glutamate 5-semialdehyde and phosphate. The product spontaneously undergoes cyclization to form 1-pyrroline-5-carboxylate. The protein is Gamma-glutamyl phosphate reductase of Anaeromyxobacter sp. (strain K).